The chain runs to 175 residues: MIEVEIKVKIDDKNKVVEQLKKLGFKFIKKKFQEDIYFNGIDRDFRETDEALRIRDEDGNFFVTYKGPKIDKISKTREEIEVKIEDKEKMRQIFKKLGFKEVPPIRKIREIYKKEDIEASIDDVEGLGLFLELEKSISDINEKDKVLEEMMEILKALNISKDNIIRKSYLELRGL.

The 175-residue stretch at Met-1–Leu-175 folds into the CYTH domain. The Proton acceptor role is filled by Tyr-37.

This sequence belongs to the adenylyl cyclase CyaB family.

Its subcellular location is the cytoplasm. The enzyme catalyses ATP = 3',5'-cyclic AMP + diphosphate. In terms of biological role, could catalyze the biosynthesis of cyclic AMP (cAMP) from ATP. The sequence is that of Putative adenylate cyclase MJ0240 from Methanocaldococcus jannaschii (strain ATCC 43067 / DSM 2661 / JAL-1 / JCM 10045 / NBRC 100440) (Methanococcus jannaschii).